The primary structure comprises 550 residues: Chaperonin GroEL (550 aa).

ATP is bound by residues 30-33 (TLGP), Lys-51, 87-91 (DGTTT), Gly-416, 480-482 (NVA), and Asp-496. The segment at 525-550 (LPKKDDEGGGGDMGGMGGMGGMGGMM) is disordered. Residues 534–550 (GGDMGGMGGMGGMGGMM) show a composition bias toward gly residues.

It belongs to the chaperonin (HSP60) family. Forms a cylinder of 14 subunits composed of two heptameric rings stacked back-to-back. Interacts with the co-chaperonin GroES.

It is found in the cytoplasm. It carries out the reaction ATP + H2O + a folded polypeptide = ADP + phosphate + an unfolded polypeptide.. Together with its co-chaperonin GroES, plays an essential role in assisting protein folding. The GroEL-GroES system forms a nano-cage that allows encapsulation of the non-native substrate proteins and provides a physical environment optimized to promote and accelerate protein folding. The chain is Chaperonin GroEL from Halorhodospira halophila (strain DSM 244 / SL1) (Ectothiorhodospira halophila (strain DSM 244 / SL1)).